Reading from the N-terminus, the 114-residue chain is MAKKGFPGMGGAPNMNNMMKQVQKMQKDMEKTQAALEEKEVEASAGGGAITVKVSGKKEVISIEIKPEVVDPEDVEMLQDLIMAAVNEAMRGAEEMVSKEMGKVTGGMNIPGLF.

A disordered region spans residues 23 to 42 (QKMQKDMEKTQAALEEKEVE). Positions 25–42 (MQKDMEKTQAALEEKEVE) are enriched in basic and acidic residues.

This sequence belongs to the YbaB/EbfC family. As to quaternary structure, homodimer.

Its subcellular location is the cytoplasm. The protein localises to the nucleoid. Functionally, binds to DNA and alters its conformation. May be involved in regulation of gene expression, nucleoid organization and DNA protection. The polypeptide is Nucleoid-associated protein Amet_4780 (Alkaliphilus metalliredigens (strain QYMF)).